Reading from the N-terminus, the 174-residue chain is Trypsin inhibitor BvTI (174 aa).

2 cysteine pairs are disulfide-bonded: cysteine 41–cysteine 84 and cysteine 131–cysteine 138.

Belongs to the protease inhibitor I3 (leguminous Kunitz-type inhibitor) family.

Its subcellular location is the secreted. Inhibits bovine trypsin and chymotrypsin, and human plasmin, plasma kallikrein and factor XIIa. The sequence is that of Trypsin inhibitor BvTI from Bauhinia variegata (Purple orchid tree).